The sequence spans 120 residues: uncharacterized protein (120 aa).

The chain crosses the membrane as a helical span at residues 8-28 (LIVKWFVGLMLIMMMVAVSLF).

The protein localises to the membrane. This is an uncharacterized protein from Bacillus anthracis.